A 180-amino-acid chain; its full sequence is Mitochondrial membrane protein FMP33 (180 aa).

The next 3 helical transmembrane spans lie at 34-54 (LYTS…LYLE), 121-141 (FSIV…STLG), and 145-165 (ILYK…YMAL).

It is found in the mitochondrion membrane. In Saccharomyces cerevisiae (strain ATCC 204508 / S288c) (Baker's yeast), this protein is Mitochondrial membrane protein FMP33 (FMP33).